A 252-amino-acid polypeptide reads, in one-letter code: Probable transcriptional regulatory protein DSY2470 (252 aa).

The protein belongs to the TACO1 family.

It localises to the cytoplasm. The chain is Probable transcriptional regulatory protein DSY2470 from Desulfitobacterium hafniense (strain Y51).